The following is a 260-amino-acid chain: Carbonic anhydrase 3 (260 aa).

A2 is subject to N-acetylalanine. The Alpha-carbonic anhydrase domain occupies 3 to 259 (KEWGYADHNG…IKGRIVKASF (257 aa)). S29, S43, S50, and S55 each carry phosphoserine. Residues 64–67 (KTCR) are involved in proton transfer. T73 carries the post-translational modification Phosphothreonine. Residues H94, H96, and H119 each contribute to the Zn(2+) site. Residue Y127 is modified to Phosphotyrosine. Residue T176 is modified to Phosphothreonine. Residues C182 and C187 each carry the S-glutathionyl cysteine modification. Residue 198 to 199 (TT) participates in substrate binding. Position 216 is a phosphothreonine (T216). Residue S219 is modified to Phosphoserine.

This sequence belongs to the alpha-carbonic anhydrase family. Requires Zn(2+) as cofactor. In terms of processing, S-thiolated both by thiol-disulfide exchange with glutathione disulfide and by oxyradical-initiated S-thiolation with reduced glutathione. Post-translationally, S-glutathionylated in hepatocytes under oxidative stress.

The protein resides in the cytoplasm. It catalyses the reaction hydrogencarbonate + H(+) = CO2 + H2O. Its activity is regulated as follows. Inhibited by acetazolamide. Its function is as follows. Reversible hydration of carbon dioxide. The sequence is that of Carbonic anhydrase 3 from Sus scrofa (Pig).